The following is a 579-amino-acid chain: Arginine--tRNA ligase (579 aa).

The 'HIGH' region motif lies at 127–137 (PNLAKEMHVGH).

Belongs to the class-I aminoacyl-tRNA synthetase family. As to quaternary structure, monomer.

It localises to the cytoplasm. The catalysed reaction is tRNA(Arg) + L-arginine + ATP = L-arginyl-tRNA(Arg) + AMP + diphosphate. The polypeptide is Arginine--tRNA ligase (Azotobacter vinelandii (strain DJ / ATCC BAA-1303)).